Reading from the N-terminus, the 97-residue chain is MVQKAHSFRRKTRKKLRKHPRRRGLPPLTRFLQEFEVGQRVHIVIEPSYHKGMPDPRFHGRTGTVVGKRGDAYIVEVPDGNKVKTLFIHPVHLRPQK.

A compositionally biased stretch (basic residues) spans 1 to 24 (MVQKAHSFRRKTRKKLRKHPRRRG). Positions 1–25 (MVQKAHSFRRKTRKKLRKHPRRRGL) are disordered.

It belongs to the eukaryotic ribosomal protein eL21 family.

This is Large ribosomal subunit protein eL21 (rpl21e) from Pyrococcus abyssi (strain GE5 / Orsay).